A 486-amino-acid chain; its full sequence is N-succinylglutamate 5-semialdehyde dehydrogenase (486 aa).

220–225 is an NAD(+) binding site; sequence GSSRTG. Catalysis depends on residues E243 and C277.

Belongs to the aldehyde dehydrogenase family. AstD subfamily.

The enzyme catalyses N-succinyl-L-glutamate 5-semialdehyde + NAD(+) + H2O = N-succinyl-L-glutamate + NADH + 2 H(+). It functions in the pathway amino-acid degradation; L-arginine degradation via AST pathway; L-glutamate and succinate from L-arginine: step 4/5. Functionally, catalyzes the NAD-dependent reduction of succinylglutamate semialdehyde into succinylglutamate. This Shewanella sp. (strain W3-18-1) protein is N-succinylglutamate 5-semialdehyde dehydrogenase.